The chain runs to 531 residues: Polyamine transporter PUT1 (531 aa).

Positions 1-76 (MADTGGRPEV…LPDGDAGGPM (76 aa)) are disordered. A compositionally biased stretch (low complexity) spans 17–33 (SPGHPAASTTAAAAADL). A compositionally biased stretch (basic and acidic residues) spans 34 to 44 (GHADTGQEKPT). Transmembrane regions (helical) follow at residues 83 to 103 (VSMI…PFGI), 113 to 133 (LLAI…EALI), 147 to 167 (YVVW…GWMK), 193 to 213 (LGGG…LTLL), 224 to 244 (VAIC…LIAL), 262 to 284 (WNLY…TLAG), 296 to 316 (ALFY…LAGT), 341 to 361 (AWLM…MFVA), 391 to 411 (TPLA…MMSF), 414 to 434 (IVAA…VAFI), 453 to 473 (TAGC…VLAL), and 476 to 496 (LKVA…QPAL).

Belongs to the amino acid-polyamine-organocation (APC) superfamily. Polyamine:cation symporter (PHS) (TC 2.A.3.12) family. Expressed in seedling roots, leaves, stems, flowers and siliques.

The protein localises to the cell membrane. Its function is as follows. Cell membrane polyamine/proton symporter involved in the polyamine uptake in cells. Possesses high affinity for spermidine and lower affinity for spermine and putrescine. Transports paraquat, a polyamine analog, and thus confers sensitivity to this chemical which is used as a herbicide. This is Polyamine transporter PUT1 (PUT1) from Oryza sativa subsp. japonica (Rice).